The sequence spans 344 residues: Pyruvate dehydrogenase E1 component subunit alpha (344 aa).

Pyruvate contacts are provided by histidine 55, tyrosine 81, arginine 82, alanine 130, isoleucine 132, aspartate 168, glycine 169, and asparagine 197. Thiamine diphosphate is bound by residues tyrosine 81, arginine 82, alanine 130, isoleucine 132, aspartate 168, glycine 169, asparagine 197, and histidine 266. Aspartate 168 is a Mg(2+) binding site. Asparagine 197 lines the Mg(2+) pocket.

As to quaternary structure, heterodimer of an alpha and a beta chain. Requires thiamine diphosphate as cofactor. The cofactor is Mg(2+).

The protein localises to the plastid. The protein resides in the chloroplast. The enzyme catalyses N(6)-[(R)-lipoyl]-L-lysyl-[protein] + pyruvate + H(+) = N(6)-[(R)-S(8)-acetyldihydrolipoyl]-L-lysyl-[protein] + CO2. The pyruvate dehydrogenase complex catalyzes the overall conversion of pyruvate to acetyl-CoA and CO(2). It contains multiple copies of three enzymatic components: pyruvate dehydrogenase (E1), dihydrolipoamide acetyltransferase (E2) and lipoamide dehydrogenase (E3). This chain is Pyruvate dehydrogenase E1 component subunit alpha (pdhA), found in Porphyra purpurea (Red seaweed).